A 185-amino-acid polypeptide reads, in one-letter code: Ribosome-recycling factor (185 aa).

Belongs to the RRF family.

It is found in the cytoplasm. In terms of biological role, responsible for the release of ribosomes from messenger RNA at the termination of protein biosynthesis. May increase the efficiency of translation by recycling ribosomes from one round of translation to another. The protein is Ribosome-recycling factor of Halorhodospira halophila (strain DSM 244 / SL1) (Ectothiorhodospira halophila (strain DSM 244 / SL1)).